The following is a 66-amino-acid chain: Protein translocase subunit SecE (66 aa).

A helical membrane pass occupies residues 29–49 (LVASTLVVVVAVFIFSPICLV).

It belongs to the SecE/SEC61-gamma family. As to quaternary structure, component of the Sec protein translocase complex. Heterotrimer consisting of SecY, SecE and SecG subunits. The heterotrimers can form oligomers, although 1 heterotrimer is thought to be able to translocate proteins. Interacts with the ribosome. Interacts with SecDF, and other proteins may be involved. Interacts with SecA.

The protein localises to the cell inner membrane. Essential subunit of the Sec protein translocation channel SecYEG. Clamps together the 2 halves of SecY. May contact the channel plug during translocation. The polypeptide is Protein translocase subunit SecE (Rickettsia montanensis).